Here is a 118-residue protein sequence, read N- to C-terminus: Large ribosomal subunit protein bL20 (118 aa).

The protein belongs to the bacterial ribosomal protein bL20 family.

Its function is as follows. Binds directly to 23S ribosomal RNA and is necessary for the in vitro assembly process of the 50S ribosomal subunit. It is not involved in the protein synthesizing functions of that subunit. This is Large ribosomal subunit protein bL20 from Lachnoclostridium phytofermentans (strain ATCC 700394 / DSM 18823 / ISDg) (Clostridium phytofermentans).